The chain runs to 356 residues: Histidinol-phosphate aminotransferase 2 (356 aa).

Lysine 213 is subject to N6-(pyridoxal phosphate)lysine.

Belongs to the class-II pyridoxal-phosphate-dependent aminotransferase family. Histidinol-phosphate aminotransferase subfamily. In terms of assembly, homodimer. Pyridoxal 5'-phosphate serves as cofactor.

The enzyme catalyses L-histidinol phosphate + 2-oxoglutarate = 3-(imidazol-4-yl)-2-oxopropyl phosphate + L-glutamate. The protein operates within amino-acid biosynthesis; L-histidine biosynthesis; L-histidine from 5-phospho-alpha-D-ribose 1-diphosphate: step 7/9. The sequence is that of Histidinol-phosphate aminotransferase 2 from Burkholderia mallei (strain ATCC 23344).